The sequence spans 622 residues: Sodium-coupled monocarboxylate transporter 1 (622 aa).

The Extracellular portion of the chain corresponds to 1-15; the sequence is MVTPGNIGSFTVWDY. The chain crosses the membrane as a helical span at residues 16-36; it reads LVFALMLLISAVIGIYYAFAG. Residues 37-51 lie on the Cytoplasmic side of the membrane; that stretch reads GGQKTSKDFLMGGRS. Residues 52–72 form a helical membrane-spanning segment; it reads MTAVPVALSLTASFMSAVTVL. Topologically, residues 73-83 are extracellular; sequence GTPAEVYRFGA. Residues 84-104 form a helical membrane-spanning segment; sequence MFIIFAFSYTIVVIISSEVFL. The Cytoplasmic segment spans residues 105–128; sequence PVFYRLGITSTYEYLELRFNKFVR. A helical membrane pass occupies residues 129 to 149; that stretch reads LLGTILFIIQTVLYTGIVIYA. Residues 150 to 161 lie on the Extracellular side of the membrane; that stretch reads PALALNQVTGFD. A helical membrane pass occupies residues 162–182; that stretch reads LWGAVVATGVVCTFYCTMGGL. Residues 183–184 lie on the Cytoplasmic side of the membrane; the sequence is KA. A helical transmembrane segment spans residues 185-205; the sequence is VVWTDVFQVGIMVAGFTSVII. The Extracellular portion of the chain corresponds to 206-241; sequence RAVVVQGGIGPILNDSYYGDRLNFWDFDPNPLKRHT. Residue asparagine 219 is glycosylated (N-linked (GlcNAc...) asparagine). The helical transmembrane segment at 242-262 threads the bilayer; the sequence is FWTIVVGGTFTWTGIYGVNQA. Residues 263–283 lie on the Cytoplasmic side of the membrane; it reads QVQRYIACKTRFQAKMSLYVN. Residues 284-304 traverse the membrane as a helical segment; the sequence is LIGLWAILACAVLSGLAMYSI. Topologically, residues 305 to 336 are extracellular; the sequence is YKDCDPWTAKFVSAPDQLMPYLALDILRDYPG. Residues 337–357 form a helical membrane-spanning segment; that stretch reads LPGLFVSCAYSGTLSTVSSSI. Topologically, residues 358-389 are cytoplasmic; sequence NALAAVTVEDLIKPYIRSLSEKKMSWISKGTS. The helical transmembrane segment at 390-410 threads the bilayer; that stretch reads LLYGAICIGMAGIASLMGGLL. At 411 to 415 the chain is on the extracellular side; sequence QAALS. The chain crosses the membrane as a helical span at residues 416–436; the sequence is IFGMVGGPLLGLFSLGILFPF. Over 437–438 the chain is Cytoplasmic; sequence VN. A helical membrane pass occupies residues 439 to 459; that stretch reads SLGAVIGLLSGFAISLWVGIG. Over 460-521 the chain is Extracellular; that stretch reads SQIYAPSPSS…LADSWYSLSY (62 aa). Asparagine 481 and asparagine 488 each carry an N-linked (GlcNAc...) asparagine glycan. The chain crosses the membrane as a helical span at residues 522-542; it reads LYFSTIGTIVAVLVGVIVSLL. Residues 543–622 are Cytoplasmic-facing; sequence SGGLKQNVNR…KGEKTNGITA (80 aa). Residues 591 to 622 form a disordered region; sequence DNDMEQGTDNPAFNNMEMTSTEKGEKTNGITA. Positions 595–609 are enriched in polar residues; sequence EQGTDNPAFNNMEMT.

Belongs to the sodium:solute symporter (SSF) (TC 2.A.21) family. In the gastrula and neurula stages, expressed in the gastrula anterior endoderm and in the entire circumference of the blastopore lip superficial endoderm. At tailbud stages, abundant expression observed in the ventral midgut region. As development proceeds expression becomes restricted to the liver diverticulum and ultimately to the presumptive gallbladder, by tadpole stage 35. Also present in pronephros and the tip of the tail.

The protein resides in the apical cell membrane. It catalyses the reaction (S)-lactate(out) + 2 Na(+)(out) = (S)-lactate(in) + 2 Na(+)(in). It carries out the reaction propanoate(out) + 2 Na(+)(out) = propanoate(in) + 2 Na(+)(in). The catalysed reaction is pyruvate(out) + 2 Na(+)(out) = pyruvate(in) + 2 Na(+)(in). The enzyme catalyses acetate(out) + 2 Na(+)(out) = acetate(in) + 2 Na(+)(in). It catalyses the reaction butanoate(out) + 2 Na(+)(out) = butanoate(in) + 2 Na(+)(in). It carries out the reaction nicotinate(out) + 2 Na(+)(out) = nicotinate(in) + 2 Na(+)(in). The catalysed reaction is (R)-3-hydroxybutanoate(out) + 2 Na(+)(out) = (R)-3-hydroxybutanoate(in) + 2 Na(+)(in). The enzyme catalyses acetoacetate(out) + 2 Na(+)(out) = acetoacetate(in) + 2 Na(+)(in). It catalyses the reaction 4-methyl-2-oxopentanoate(out) + 2 Na(+)(out) = 4-methyl-2-oxopentanoate(in) + 2 Na(+)(in). It carries out the reaction 5-oxo-L-proline(out) + 2 Na(+)(out) = 5-oxo-L-proline(in) + 2 Na(+)(in). The catalysed reaction is iodide(out) = iodide(in). The enzyme catalyses chloride(in) = chloride(out). It catalyses the reaction nitrate(in) = nitrate(out). It carries out the reaction bromide(in) = bromide(out). Functionally, acts as an electrogenic sodium (Na(+)) and chloride (Cl-)-dependent sodium-coupled solute transporter, including transport of monocarboxylates (short-chain fatty acids including L-lactate, D-lactate, pyruvate, acetate, propionate, valerate and butyrate), mocarboxylate drugs (nicotinate, benzoate, salicylate and 5-aminosalicylate) and ketone bodies (beta-D-hydroxybutyrate, acetoacetate and alpha-ketoisocaproate), with a Na(+):substrate stoichiometry of between 4:1 and 2:1. Catalyzes passive carrier mediated diffusion of iodide. Mediates iodide transport from the thyrocyte into the colloid lumen through the apical membrane. Mediates sodium-coupled electrogenic transport of pyroglutamate (5-oxo-L-proline). Can mediate the transport of chloride, bromide, iodide and nitrate ions when external concentration of sodium ions is reduced. In Xenopus laevis (African clawed frog), this protein is Sodium-coupled monocarboxylate transporter 1.